We begin with the raw amino-acid sequence, 178 residues long: Large ribosomal subunit protein uL6 (178 aa).

This sequence belongs to the universal ribosomal protein uL6 family. As to quaternary structure, part of the 50S ribosomal subunit.

This protein binds to the 23S rRNA, and is important in its secondary structure. It is located near the subunit interface in the base of the L7/L12 stalk, and near the tRNA binding site of the peptidyltransferase center. The sequence is that of Large ribosomal subunit protein uL6 from Buchnera aphidicola subsp. Schizaphis graminum (strain Sg).